Reading from the N-terminus, the 85-residue chain is Small ribosomal subunit protein uS17 (85 aa).

The protein belongs to the universal ribosomal protein uS17 family. Part of the 30S ribosomal subunit.

In terms of biological role, one of the primary rRNA binding proteins, it binds specifically to the 5'-end of 16S ribosomal RNA. The chain is Small ribosomal subunit protein uS17 from Pseudoalteromonas translucida (strain TAC 125).